The sequence spans 439 residues: uncharacterized protein (439 aa).

Residues 273–439 (PIIILLDHSG…EARKIYKSIS (167 aa)) enclose the VWFA domain.

This is an uncharacterized protein from Methanocaldococcus jannaschii (strain ATCC 43067 / DSM 2661 / JAL-1 / JCM 10045 / NBRC 100440) (Methanococcus jannaschii).